The following is a 122-amino-acid chain: Large ribosomal subunit protein uL14 (122 aa).

The protein belongs to the universal ribosomal protein uL14 family. In terms of assembly, part of the 50S ribosomal subunit. Forms a cluster with proteins L3 and L19. In the 70S ribosome, L14 and L19 interact and together make contacts with the 16S rRNA in bridges B5 and B8.

In terms of biological role, binds to 23S rRNA. Forms part of two intersubunit bridges in the 70S ribosome. In Shewanella baltica (strain OS223), this protein is Large ribosomal subunit protein uL14.